A 154-amino-acid polypeptide reads, in one-letter code: NADPH-dependent 7-cyano-7-deazaguanine reductase (154 aa).

The Thioimide intermediate role is filled by cysteine 52. Aspartate 59 functions as the Proton donor in the catalytic mechanism. Substrate is bound by residues 74–76 (VES) and 93–94 (HE).

Belongs to the GTP cyclohydrolase I family. QueF type 1 subfamily.

The protein localises to the cytoplasm. It catalyses the reaction 7-aminomethyl-7-carbaguanine + 2 NADP(+) = 7-cyano-7-deazaguanine + 2 NADPH + 3 H(+). Its pathway is tRNA modification; tRNA-queuosine biosynthesis. In terms of biological role, catalyzes the NADPH-dependent reduction of 7-cyano-7-deazaguanine (preQ0) to 7-aminomethyl-7-deazaguanine (preQ1). The sequence is that of NADPH-dependent 7-cyano-7-deazaguanine reductase from Sinorhizobium medicae (strain WSM419) (Ensifer medicae).